We begin with the raw amino-acid sequence, 420 residues long: D-tagatose-1,6-bisphosphate aldolase subunit GatZ (420 aa).

It belongs to the GatZ/KbaZ family. GatZ subfamily. As to quaternary structure, forms a complex with GatY.

Its pathway is carbohydrate metabolism; D-tagatose 6-phosphate degradation; D-glyceraldehyde 3-phosphate and glycerone phosphate from D-tagatose 6-phosphate: step 2/2. Its function is as follows. Component of the tagatose-1,6-bisphosphate aldolase GatYZ that is required for full activity and stability of the Y subunit. Could have a chaperone-like function for the proper and stable folding of GatY. When expressed alone, GatZ does not show any aldolase activity. Is involved in the catabolism of galactitol. The polypeptide is D-tagatose-1,6-bisphosphate aldolase subunit GatZ (Escherichia coli O6:K15:H31 (strain 536 / UPEC)).